We begin with the raw amino-acid sequence, 569 residues long: 5'-AMP-activated protein kinase subunit gamma-2 (569 aa).

Positions 1 to 222 (MGSAVMDTKK…TRPPLASPTH (222 aa)) are disordered. 8 positions are modified to phosphoserine: Ser65, Ser71, Ser73, Ser90, Ser138, Ser143, Ser161, and Ser162. A compositionally biased stretch (low complexity) spans 156-167 (TSGLSSSPSTPT). Position 165 is a phosphothreonine (Thr165). Residues 179–189 (SYKHEPERLEN) show a composition bias toward basic and acidic residues. Positions 192-212 (YASSSPPDTGQRFCPSSFQSP) are enriched in polar residues. Ser196 carries the post-translational modification Phosphoserine. 3 CBS domains span residues 275–335 (PTSS…KSPM), 357–415 (TFKP…MSDM), and 430–492 (IGTY…NLDI). ADP is bound by residues Arg302, 317-322 (MLTITD), Val362, 383-384 (HR), and Lys402. Residues Arg302, 317–322 (MLTITD), Val362, His383, 383–384 (HR), Lys402, Thr432, Ala437, 458–459 (SA), 474–477 (SKFD), Arg501, His530, 530–531 (HR), and 546–549 (SLSD) each bind AMP. ATP is bound by residues Arg302, 317-322 (MLTITD), Val362, 383-384 (HR), Arg384, and Lys402. The AMPK pseudosubstrate signature appears at 370–391 (LFDAVYSLIKNKIHRLPVIDPI). Residues 474–477 (SKFD), Arg501, and 530–531 (HR) each bind ADP. ATP contacts are provided by residues 474-477 (SKFD), Arg501, and 530-531 (HR). One can recognise a CBS 4 domain in the interval 504–562 (YFEGVVKCNKLEILETIVDRIVRAEVHRLVVVNEADSIVGIISLSDILQALILTPAGAK).

Belongs to the 5'-AMP-activated protein kinase gamma subunit family. As to quaternary structure, AMPK is a heterotrimer of an alpha catalytic subunit (PRKAA1 or PRKAA2), a beta (PRKAB1 or PRKAB2) and a gamma non-catalytic subunits (PRKAG1, PRKAG2 or PRKAG3). Interacts with FNIP1 and FNIP2. Post-translationally, phosphorylated by ULK1; leading to negatively regulate AMPK activity and suggesting the existence of a regulatory feedback loop between ULK1 and AMPK. In terms of processing, glycosylated; O-GlcNAcylated by OGT, promoting the AMP-activated protein kinase (AMPK) activity. Isoform B is ubiquitously expressed except in liver and thymus. The highest level is detected in heart with abundant expression in placenta and testis.

In terms of biological role, AMP/ATP-binding subunit of AMP-activated protein kinase (AMPK), an energy sensor protein kinase that plays a key role in regulating cellular energy metabolism. In response to reduction of intracellular ATP levels, AMPK activates energy-producing pathways and inhibits energy-consuming processes: inhibits protein, carbohydrate and lipid biosynthesis, as well as cell growth and proliferation. AMPK acts via direct phosphorylation of metabolic enzymes, and by longer-term effects via phosphorylation of transcription regulators. Also acts as a regulator of cellular polarity by remodeling the actin cytoskeleton; probably by indirectly activating myosin. Gamma non-catalytic subunit mediates binding to AMP, ADP and ATP, leading to activate or inhibit AMPK: AMP-binding results in allosteric activation of alpha catalytic subunit (PRKAA1 or PRKAA2) both by inducing phosphorylation and preventing dephosphorylation of catalytic subunits. ADP also stimulates phosphorylation, without stimulating already phosphorylated catalytic subunit. ATP promotes dephosphorylation of catalytic subunit, rendering the AMPK enzyme inactive. This Homo sapiens (Human) protein is 5'-AMP-activated protein kinase subunit gamma-2 (PRKAG2).